The following is a 570-amino-acid chain: Proline--tRNA ligase (570 aa).

It belongs to the class-II aminoacyl-tRNA synthetase family. ProS type 1 subfamily. As to quaternary structure, homodimer.

It is found in the cytoplasm. It catalyses the reaction tRNA(Pro) + L-proline + ATP = L-prolyl-tRNA(Pro) + AMP + diphosphate. Catalyzes the attachment of proline to tRNA(Pro) in a two-step reaction: proline is first activated by ATP to form Pro-AMP and then transferred to the acceptor end of tRNA(Pro). As ProRS can inadvertently accommodate and process non-cognate amino acids such as alanine and cysteine, to avoid such errors it has two additional distinct editing activities against alanine. One activity is designated as 'pretransfer' editing and involves the tRNA(Pro)-independent hydrolysis of activated Ala-AMP. The other activity is designated 'posttransfer' editing and involves deacylation of mischarged Ala-tRNA(Pro). The misacylated Cys-tRNA(Pro) is not edited by ProRS. This chain is Proline--tRNA ligase, found in Desulfotalea psychrophila (strain LSv54 / DSM 12343).